The following is a 102-amino-acid chain: RNA-binding protein Hfq (102 aa).

Positions 9-68 (DPFVNALRRERVPVSIYLVNGIKLQGQIESFDQFVILLKNTVSQMVYKHAISTVVPSRPV) constitute a Sm domain. A disordered region spans residues 63–102 (VPSRPVSHHSNNAGGGASNNYHHGSNAQGSTAQQDSEETE). Residues 70–88 (HHSNNAGGGASNNYHHGSN) show a composition bias toward low complexity.

Belongs to the Hfq family. Homohexamer.

Functionally, RNA chaperone that binds small regulatory RNA (sRNAs) and mRNAs to facilitate mRNA translational regulation in response to envelope stress, environmental stress and changes in metabolite concentrations. Also binds with high specificity to tRNAs. The polypeptide is RNA-binding protein Hfq (Salmonella heidelberg (strain SL476)).